The primary structure comprises 470 residues: Pancreatic lipase-related protein 2 (470 aa).

Positions 1-18 (MMLFVWTTGLLLLATARG) are cleaved as a signal peptide. A disulfide bridge connects residues cysteine 22 and cysteine 28. A required for galactolipase activity region spans residues 94 to 106 (IHGFIDNGEKDWL). An intrachain disulfide couples cysteine 110 to cysteine 121. The active-site Nucleophile is serine 172. Residue aspartate 196 is the Charge relay system of the active site. Positions 207, 210, 212, and 215 each coordinate Ca(2+). Cysteine 257 and cysteine 281 form a disulfide bridge. Residues 258 to 280 (EKNIISTIVDVNGFLEGITSLAA) form a required for galactolipase activity region. The active-site Charge relay system is histidine 283. 2 cysteine pairs are disulfide-bonded: cysteine 305–cysteine 316 and cysteine 319–cysteine 324. Asparagine 354 and asparagine 429 each carry an N-linked (GlcNAc...) asparagine glycan. In terms of domain architecture, PLAT spans 358-470 (WRYKVSVTLS…EDVLQSLSPC (113 aa)). Residues cysteine 454 and cysteine 470 are joined by a disulfide bond.

Belongs to the AB hydrolase superfamily. Lipase family. Pancreas.

The protein resides in the secreted. It localises to the zymogen granule membrane. Its subcellular location is the cell projection. The protein localises to the neuron projection. It catalyses the reaction a triacylglycerol + H2O = a diacylglycerol + a fatty acid + H(+). The enzyme catalyses a 1,2-diacyl-3-O-(beta-D-galactosyl)-sn-glycerol + 2 H2O = 3-beta-D-galactosyl-sn-glycerol + 2 a fatty acid + 2 H(+). It carries out the reaction 1,2,3-tri-(9Z-octadecenoyl)-glycerol + H2O = di-(9Z)-octadecenoylglycerol + (9Z)-octadecenoate + H(+). The catalysed reaction is di-(9Z)-octadecenoylglycerol + H2O = (9Z-octadecenoyl)-glycerol + (9Z)-octadecenoate + H(+). It catalyses the reaction (9Z-octadecenoyl)-glycerol + H2O = glycerol + (9Z)-octadecenoate + H(+). The enzyme catalyses 1-(9Z-octadecenoyl)-glycerol + H2O = glycerol + (9Z)-octadecenoate + H(+). It carries out the reaction 1,2,3-tripropanoylglycerol + H2O = dipropanoylglycerol + propanoate + H(+). The catalysed reaction is 1,2,3-tributanoylglycerol + H2O = dibutanoylglycerol + butanoate + H(+). It catalyses the reaction 1,2,3-trioctanoylglycerol + H2O = dioctanoylglycerol + octanoate + H(+). The enzyme catalyses 1,2-didecanoylglycerol + H2O = decanoylglycerol + decanoate + H(+). It carries out the reaction long chain 1,2-diacyl-3-O-beta-D-galactosyl-sn-glycerol + H2O = long chain acyl-3-O-beta-D-galactosyl-sn-glycerol + a fatty acid + H(+). The catalysed reaction is 1,2-dioctanoyl-3-O-beta-D-galactosyl-sn-glycerol + H2O = octanoyl-3-(beta-D-galactosyl)-sn-glycerol + octanoate + H(+). It catalyses the reaction 1,2-didodecanoyl-3-beta-D-galactosyl-sn-glycerol + H2O = dodecanoyl-3-beta-D-galactosyl-sn-glycerol + dodecanoate + H(+). The enzyme catalyses 1-beta-D-galactosyl-2,3-didodecanoyl-sn-glycerol + H2O = 1-beta-D-galactosyl-dodecanoyl-sn-glycerol + dodecanoate + H(+). It carries out the reaction a 1,2-diacyl-3-O-[alpha-D-galactosyl-(1-&gt;6)-beta-D-galactosyl]-sn-glycerol + H2O = acyl-3-O-[alpha-D-galactosyl-(1-&gt;6)-beta-D-galactosyl]-sn-glycerol + a fatty acid + H(+). The catalysed reaction is long chain 1,2-diacyl-3-O-[alpha-D-galactosyl-(1-&gt;6)-beta-D-galactosyl]-sn-glycerol + H2O = long chain acyl-3-O-[alpha-D-galactosyl-(1-&gt;6)-beta-D-galactosyl]-sn-glycerol + a fatty acid + H(+). It catalyses the reaction 1,2-dioctanoyl-3-O-[alpha-D-galactosyl-(1-&gt;6)-beta-D-galactosyl]-sn-glycerol + H2O = octanoyl-3-O-[alpha-D-galactosyl-(1-&gt;6)-beta-D-galactosyl]-sn-glycerol + octanoate + H(+). The enzyme catalyses 1,2-didodecanoyl-3-O-[alpha-D-galactosyl-(1-&gt;6)-beta-D-galactosyl]-sn-glycerol + H2O = dodecanoyl-3-O-[alpha-D-galactosyl-(1-&gt;6)-beta-D-galactosyl]-sn-glycerol + dodecanoate + H(+). It carries out the reaction a 1,2-diacyl-sn-glycero-3-phosphocholine + H2O = a monoacyl-sn-glycero-3-phosphocholine + a fatty acid + H(+). It functions in the pathway glycerolipid metabolism; triacylglycerol degradation. The protein operates within glycolipid metabolism. With respect to regulation, triacylglycerol lipase activity is inhibited by increasing bile salts concentrations and not reactivated by CLPS. In terms of biological role, lipase that primarily hydrolyzes triglycerides and galactosylglycerides. In neonates, may play a major role in pancreatic digestion of dietary fats such as milk fat globules enriched in long-chain triglycerides. Hydrolyzes short-, medium- and long-chain fatty acyls in triglycerides without apparent positional specificity. Can completely deacylate triacylglycerols. When the liver matures and bile salt synthesis increases, likely functions mainly as a galactolipase and monoacylglycerol lipase. Hydrolyzes monogalactosyldiglycerols (MGDG) and digalactosyldiacylglycerols (DGDG) present in a plant-based diet, releasing long-chain polyunsaturated fatty acids. Hydrolyzes medium- and long-chain fatty acyls in galactolipids. May act together with LIPF to hydrolyze partially digested triglycerides. Hydrolyzes long-chain monoglycerides with high efficiency. In cytotoxic T cells, contributes to perforin-dependent cell lysis, but is unlikely to mediate direct cytotoxicity. Also has low phospholipase activity. In neurons, required for the localization of the phospholipid 1-oleoyl-2-palmitoyl-PC (OPPC) to neurite tips through acyl chain remodeling of membrane phospholipids. The resulting OPPC-rich lipid membrane domain recruits the t-SNARE protein STX4 by selectively interacting with the STX4 transmembrane domain and this promotes surface expression of the dopamine transporter SLC6A3/DAT at neurite tips by facilitating fusion of SLC6A3-containing transport vesicles with the plasma membrane. The chain is Pancreatic lipase-related protein 2 from Myocastor coypus (Coypu).